The chain runs to 135 residues: Cytochrome c2 (135 aa).

An N-terminal signal peptide occupies residues 1-23 (MKKGFLAAGVFAAVAFASGAALA). Heme c contacts are provided by C37, C40, H41, and M114.

It belongs to the cytochrome c family. Binds 1 heme c group covalently per subunit.

Its function is as follows. Cytochrome c2 is found mainly in purple, non-sulfur, photosynthetic bacteria where it functions as the electron donor to the oxidized bacteriochlorophyll in the photophosphorylation pathway. However, it may also have a role in the respiratory chain and is found in some non-photosynthetic bacteria. This chain is Cytochrome c2 (cycA), found in Rhodospirillum rubrum (strain ATCC 11170 / ATH 1.1.1 / DSM 467 / LMG 4362 / NCIMB 8255 / S1).